The primary structure comprises 280 residues: Putative pyruvate, phosphate dikinase regulatory protein (280 aa).

ADP is bound at residue 156–163; it reads GVSRTSKT.

This sequence belongs to the pyruvate, phosphate/water dikinase regulatory protein family. PDRP subfamily.

The enzyme catalyses N(tele)-phospho-L-histidyl/L-threonyl-[pyruvate, phosphate dikinase] + ADP = N(tele)-phospho-L-histidyl/O-phospho-L-threonyl-[pyruvate, phosphate dikinase] + AMP + H(+). The catalysed reaction is N(tele)-phospho-L-histidyl/O-phospho-L-threonyl-[pyruvate, phosphate dikinase] + phosphate + H(+) = N(tele)-phospho-L-histidyl/L-threonyl-[pyruvate, phosphate dikinase] + diphosphate. Its function is as follows. Bifunctional serine/threonine kinase and phosphorylase involved in the regulation of the pyruvate, phosphate dikinase (PPDK) by catalyzing its phosphorylation/dephosphorylation. The sequence is that of Putative pyruvate, phosphate dikinase regulatory protein from Hyphomonas neptunium (strain ATCC 15444).